The sequence spans 428 residues: RUN domain-containing protein 3A (428 aa).

In terms of domain architecture, RUN spans 52–182 (DDSSEEFINF…IDFSFCLKGE (131 aa)). The stretch at 237 to 314 (ESWRNKCRKM…ELQEQLTSLI (78 aa)) forms a coiled coil. Residues 349–375 (HRGSFPSPEPHISLTTGSQRTERKQNG) are disordered.

This sequence belongs to the RUNDC3 family.

In Danio rerio (Zebrafish), this protein is RUN domain-containing protein 3A (rundc3a).